A 643-amino-acid chain; its full sequence is Phosphomethylpyrimidine synthase (643 aa).

Substrate-binding positions include asparagine 248, methionine 277, tyrosine 306, histidine 342, 362–364 (SRG), 403–406 (DGLR), and glutamate 442. Position 446 (histidine 446) interacts with Zn(2+). A substrate-binding site is contributed by tyrosine 469. Residue histidine 510 coordinates Zn(2+). Residues cysteine 590, cysteine 593, and cysteine 598 each coordinate [4Fe-4S] cluster.

Belongs to the ThiC family. In terms of assembly, homodimer. The cofactor is [4Fe-4S] cluster.

It carries out the reaction 5-amino-1-(5-phospho-beta-D-ribosyl)imidazole + S-adenosyl-L-methionine = 4-amino-2-methyl-5-(phosphooxymethyl)pyrimidine + CO + 5'-deoxyadenosine + formate + L-methionine + 3 H(+). It participates in cofactor biosynthesis; thiamine diphosphate biosynthesis. Its function is as follows. Catalyzes the synthesis of the hydroxymethylpyrimidine phosphate (HMP-P) moiety of thiamine from aminoimidazole ribotide (AIR) in a radical S-adenosyl-L-methionine (SAM)-dependent reaction. This chain is Phosphomethylpyrimidine synthase, found in Burkholderia lata (strain ATCC 17760 / DSM 23089 / LMG 22485 / NCIMB 9086 / R18194 / 383).